The chain runs to 138 residues: Ribosome-binding factor A (138 aa).

The protein belongs to the RbfA family. As to quaternary structure, monomer. Binds 30S ribosomal subunits, but not 50S ribosomal subunits or 70S ribosomes.

It localises to the cytoplasm. Its function is as follows. One of several proteins that assist in the late maturation steps of the functional core of the 30S ribosomal subunit. Associates with free 30S ribosomal subunits (but not with 30S subunits that are part of 70S ribosomes or polysomes). Required for efficient processing of 16S rRNA. May interact with the 5'-terminal helix region of 16S rRNA. The protein is Ribosome-binding factor A of Paracoccus denitrificans (strain Pd 1222).